We begin with the raw amino-acid sequence, 364 residues long: Ferrochelatase (364 aa).

Fe cation-binding residues include histidine 210 and glutamate 291.

It belongs to the ferrochelatase family.

It localises to the cytoplasm. It catalyses the reaction heme b + 2 H(+) = protoporphyrin IX + Fe(2+). It functions in the pathway porphyrin-containing compound metabolism; protoheme biosynthesis; protoheme from protoporphyrin-IX: step 1/1. Functionally, catalyzes the ferrous insertion into protoporphyrin IX. The sequence is that of Ferrochelatase from Idiomarina loihiensis (strain ATCC BAA-735 / DSM 15497 / L2-TR).